An 847-amino-acid polypeptide reads, in one-letter code: Putative disease resistance RPP13-like protein 3 (847 aa).

A coiled-coil region spans residues 24-41 (LMGVKDDLEELKTELTCI). Positions 143 to 453 (TNVRVRQLRR…AEGFIQEDEE (311 aa)) constitute an NB-ARC domain. ATP is bound at residue 192 to 199 (GMGGLGKT).

It belongs to the disease resistance NB-LRR family. RPP13 subfamily.

Functionally, potential disease resistance protein. The sequence is that of Putative disease resistance RPP13-like protein 3 (RPP13L3) from Arabidopsis thaliana (Mouse-ear cress).